Reading from the N-terminus, the 366-residue chain is Histidinol-phosphate aminotransferase 2 (366 aa).

Lysine 226 carries the N6-(pyridoxal phosphate)lysine modification.

It belongs to the class-II pyridoxal-phosphate-dependent aminotransferase family. Histidinol-phosphate aminotransferase subfamily. In terms of assembly, homodimer. Pyridoxal 5'-phosphate is required as a cofactor.

It carries out the reaction L-histidinol phosphate + 2-oxoglutarate = 3-(imidazol-4-yl)-2-oxopropyl phosphate + L-glutamate. The protein operates within amino-acid biosynthesis; L-histidine biosynthesis; L-histidine from 5-phospho-alpha-D-ribose 1-diphosphate: step 7/9. The polypeptide is Histidinol-phosphate aminotransferase 2 (Haemophilus influenzae (strain 86-028NP)).